The primary structure comprises 512 residues: Protein SHC1 (512 aa).

Acidic residues predominate over residues 101 to 113; that stretch reads EQDEFENDVEDDA. 2 disordered regions span residues 101-122 and 144-164; these read EQDE…EKSQ and DGNS…ESVA. 4 Sel1-like repeats span residues 318–353, 354–389, 390–429, and 433–470; these read PDAQ…KRMH, IESV…TKNH, PAAM…SMAS, and CGAP…ALGH.

Belongs to the SKT5 family.

It is found in the cytoplasm. The protein localises to the cytoplasmic granule membrane. Required for the activation of chitin synthase III (CHS3) activity during the sporulation process. This is Protein SHC1 (SHC1) from Saccharomyces cerevisiae (strain ATCC 204508 / S288c) (Baker's yeast).